The following is a 97-amino-acid chain: Secreted Ly-6/uPAR domain-containing protein 2 (97 aa).

The N-terminal stretch at 1 to 22 is a signal peptide; sequence MQLGTGLLLAAVLSLQLAAAEA. Disulfide bonds link C25–C47, C28–C34, C40–C68, C72–C88, and C89–C94. In terms of domain architecture, UPAR/Ly6 spans 25–95; the sequence is CHQCTGFGGC…IACCQTSLCN (71 aa).

In terms of assembly, interacts with CHRNA3, CHRNA4, CHRNA5, CHRNA7, CHRNB2 and CHRNB4. Interacts with CHRM1 and CHRM3 probably in an allosteric manner. Expressed at highest levels in cervix and esophagus, followed by adult and fetal skin. Expressed at lower levels in brain, lung, stomach, small intestine, colon, rectum, uterus, and thymus. Not detected in spleen nor bone marrow. Up-regulated 3-fold in psoriatic lesional skin. In the epidermis, predominantly produced by keratinocytes of the suprabasal epidermal compartment (at protein level). In attached gingiva, produced at highest levels by basal cells located in the lowermost epithelial layers (at protein level). Detected in serum (at protein level).

Its subcellular location is the secreted. Functionally, binds and may modulate the functional properties of nicotinic and muscarinic acetylcholine receptors. May regulate keratinocytes proliferation, differentiation and apoptosis. In vitro moderately inhibits ACh-evoked currents of alpha-3:beta-2-containing nAChRs and strongly these of alpha-4:beta-2-containing nAChRs, modulates alpha-7-containing nAChRs, and inhibits nicotine-induced signaling probably implicating alpha-3:beta-4-containing nAChRs. Proposed to act on alpha-3:beta-2 and alpha-7 nAChRs in an orthosteric, and on mAChRs, such as CHRM1 and CHRM3, in an allosteric manner. This chain is Secreted Ly-6/uPAR domain-containing protein 2, found in Homo sapiens (Human).